Here is a 543-residue protein sequence, read N- to C-terminus: Hydroxylamine reductase (543 aa).

Positions 3, 6, 15, and 21 each coordinate [4Fe-4S] cluster. Hybrid [4Fe-2O-2S] cluster is bound by residues H239, E263, C307, C398, C426, C451, E486, and K488. Cysteine persulfide is present on C398.

The protein belongs to the HCP family. [4Fe-4S] cluster is required as a cofactor. The cofactor is hybrid [4Fe-2O-2S] cluster.

Its subcellular location is the cytoplasm. The catalysed reaction is A + NH4(+) + H2O = hydroxylamine + AH2 + H(+). Catalyzes the reduction of hydroxylamine to form NH(3) and H(2)O. The sequence is that of Hydroxylamine reductase from Methanococcus vannielii (strain ATCC 35089 / DSM 1224 / JCM 13029 / OCM 148 / SB).